We begin with the raw amino-acid sequence, 87 residues long: U3-theraphotoxin-Hhn1a 18 (87 aa).

A signal peptide spans 1–24 (MVNTKASMFLTFAGLVLLFVVCYA). The propeptide occupies 25-52 (SESEEKEFPKEMLSSIFAVDNDFKQEER). Intrachain disulfides connect cysteine 54-cysteine 67, cysteine 61-cysteine 72, and cysteine 66-cysteine 79.

The protein belongs to the neurotoxin 10 (Hwtx-1) family. 51 (Hntx-8) subfamily. Hntx-8 sub-subfamily. In terms of tissue distribution, expressed by the venom gland.

It localises to the secreted. In terms of biological role, ion channel inhibitor. The protein is U3-theraphotoxin-Hhn1a 18 of Cyriopagopus hainanus (Chinese bird spider).